The following is a 59-amino-acid chain: Large ribosomal subunit protein uL30 (59 aa).

The protein belongs to the universal ribosomal protein uL30 family. As to quaternary structure, part of the 50S ribosomal subunit.

This is Large ribosomal subunit protein uL30 from Clostridium botulinum (strain 657 / Type Ba4).